Reading from the N-terminus, the 286-residue chain is Translocon-associated protein subunit alpha (286 aa).

An N-terminal signal peptide occupies residues 1–21 (MRLLPRLLLLFLLAFPAAVLL). At 22 to 207 (RGGPGGSLAL…EREDGLDGET (186 aa)) the chain is on the lumenal side. A compositionally biased stretch (acidic residues) spans 46–75 (IIEDEDDEAEVEEDEPTDLAEDKEEEDVSS). The segment at 46–83 (IIEDEDDEAEVEEDEPTDLAEDKEEEDVSSEPEASPSA) is disordered. Asn-136 and Asn-191 each carry an N-linked (GlcNAc...) asparagine glycan. The helical transmembrane segment at 208–228 (IFMYMFLAGLGLLVVVGLHQL) threads the bilayer. Over 229 to 286 (LESRKRKRPIQKVEMGTSSQNDVDMSWIPQETLNQINKASPRRQPRKRAQKRSVGSDE) the chain is Cytoplasmic. Positions 236 to 286 (RPIQKVEMGTSSQNDVDMSWIPQETLNQINKASPRRQPRKRAQKRSVGSDE) are disordered. The segment covering 244 to 266 (GTSSQNDVDMSWIPQETLNQINK) has biased composition (polar residues). Ser-247 carries the post-translational modification Phosphoserine. The residue at position 260 (Thr-260) is a Phosphothreonine. A Phosphoserine modification is found at Ser-268. A compositionally biased stretch (basic residues) spans 268-279 (SPRRQPRKRAQK).

It belongs to the TRAP-alpha family. In terms of assembly, heterotetramer of TRAP-alpha, TRAP-beta, TRAP-delta and TRAP-gamma. Interacts with palmitoylated calnexin (CALX), the interaction is required for efficient folding of glycosylated proteins.

The protein resides in the endoplasmic reticulum membrane. Its function is as follows. TRAP proteins are part of a complex whose function is to bind calcium to the ER membrane and thereby regulate the retention of ER resident proteins. May be involved in the recycling of the translocation apparatus after completion of the translocation process or may function as a membrane-bound chaperone facilitating folding of translocated proteins. In Mus musculus (Mouse), this protein is Translocon-associated protein subunit alpha (Ssr1).